A 268-amino-acid polypeptide reads, in one-letter code: Tryptophan synthase alpha chain (268 aa).

Active-site proton acceptor residues include Glu-49 and Asp-60.

The protein belongs to the TrpA family. Tetramer of two alpha and two beta chains.

The catalysed reaction is (1S,2R)-1-C-(indol-3-yl)glycerol 3-phosphate + L-serine = D-glyceraldehyde 3-phosphate + L-tryptophan + H2O. It participates in amino-acid biosynthesis; L-tryptophan biosynthesis; L-tryptophan from chorismate: step 5/5. Functionally, the alpha subunit is responsible for the aldol cleavage of indoleglycerol phosphate to indole and glyceraldehyde 3-phosphate. The protein is Tryptophan synthase alpha chain of Vibrio metschnikovii.